Reading from the N-terminus, the 482-residue chain is Ribulose bisphosphate carboxylase large chain (482 aa).

Residues 1-2 (MS) constitute a propeptide that is removed on maturation. The residue at position 3 (Pro-3) is an N-acetylproline. Lys-14 carries the post-translational modification N6,N6,N6-trimethyllysine. The substrate site is built by Asn-123 and Thr-173. Lys-175 (proton acceptor) is an active-site residue. A substrate-binding site is contributed by Lys-177. Positions 201, 203, and 204 each coordinate Mg(2+). At Lys-201 the chain carries N6-carboxylysine. His-294 (proton acceptor) is an active-site residue. The substrate site is built by Arg-295, His-327, and Ser-379.

It belongs to the RuBisCO large chain family. Type I subfamily. Heterohexadecamer of 8 large chains and 8 small chains; disulfide-linked. The disulfide link is formed within the large subunit homodimers. Mg(2+) is required as a cofactor. The disulfide bond which can form in the large chain dimeric partners within the hexadecamer appears to be associated with oxidative stress and protein turnover.

It localises to the plastid. The protein resides in the chloroplast. The enzyme catalyses 2 (2R)-3-phosphoglycerate + 2 H(+) = D-ribulose 1,5-bisphosphate + CO2 + H2O. The catalysed reaction is D-ribulose 1,5-bisphosphate + O2 = 2-phosphoglycolate + (2R)-3-phosphoglycerate + 2 H(+). Its function is as follows. RuBisCO catalyzes two reactions: the carboxylation of D-ribulose 1,5-bisphosphate, the primary event in carbon dioxide fixation, as well as the oxidative fragmentation of the pentose substrate in the photorespiration process. Both reactions occur simultaneously and in competition at the same active site. The chain is Ribulose bisphosphate carboxylase large chain from Stegnosperma halimifolium.